Reading from the N-terminus, the 101-residue chain is DNA-binding protein Fis (101 aa).

The segment at residues 77–96 (QTRAANMLGINRGTLRKKLK) is a DNA-binding region (H-T-H motif).

Belongs to the transcriptional regulatory Fis family. In terms of assembly, homodimer.

Functionally, activates ribosomal RNA transcription. Plays a direct role in upstream activation of rRNA promoters. This is DNA-binding protein Fis from Shewanella halifaxensis (strain HAW-EB4).